We begin with the raw amino-acid sequence, 254 residues long: Galactitol 2-dehydrogenase (L-tagatose-forming) (254 aa).

Residues 21-23 (SGI), D42, 66-67 (DV), Y159, K163, and 192-194 (VAT) each bind NAD(+). Y159 serves as the catalytic Proton acceptor. W254 lines the Mg(2+) pocket.

Belongs to the short-chain dehydrogenases/reductases (SDR) family. In terms of assembly, homotetramer. A divalent metal cation serves as cofactor.

It carries out the reaction galactitol + NAD(+) = keto-L-tagatose + NADH + H(+). With respect to regulation, inhibited by the chelating agents EDTA and alpha,alpha'-dipyridyl. Inhibited by Zn(2+) and Fe(2+). Catalyzes the interconversion of galactitol to the rare sugar L-tagatose. Shows activity with a wide range of substrates, and catalyzes the oxidation of a variety of polyvalent aliphatic alcohols and polyols to the corresponding ketones and ketoses, respectively, and in the reverse reaction, it reduces ketones with high stereoselectivity yielding the corresponding S-configurated alcohols. Shows high activity with D-threitol, xylitol, 1,2-hexanediol, 1,2-pentanediol, 2-hexanol, L-erythrulose, D-ribulose and acetoin. Specific for NAD(+). The sequence is that of Galactitol 2-dehydrogenase (L-tagatose-forming) from Cereibacter sphaeroides (Rhodobacter sphaeroides).